Here is a 1100-residue protein sequence, read N- to C-terminus: Serine/threonine/tyrosine-interacting-like protein 2 (1100 aa).

The segment covering 1–12 (MASSVEDQQLQQ) has biased composition (polar residues). Residues 1–21 (MASSVEDQQLQQEEAESVKDV) are disordered. The 149-residue stretch at 141–289 (SPVDEVWPNV…LRQLNETLME (149 aa)) folds into the Tyrosine-protein phosphatase domain. Over residues 356-374 (CGSQQPNMQQPADQPSLPG) the composition is skewed to polar residues. Disordered regions lie at residues 356-383 (CGSQ…EDGD), 411-436 (EDED…TSED), 479-504 (AAAR…DDVQ), 542-561 (KENA…APDL), 575-615 (KQQK…ERSR), 667-686 (VLSG…TPAP), 888-1060 (CEKP…DEEI), and 1075-1100 (VAEE…HDHK). Basic and acidic residues predominate over residues 418-428 (DKTQRAVRPDD). Positions 580 to 615 (HGGEENKEEILQMSRGEDTATARRRQRREEVLERSR) are enriched in basic and acidic residues. Over residues 667–676 (VLSGRSTRSL) the composition is skewed to low complexity. A compositionally biased stretch (basic and acidic residues) spans 888–898 (CEKPKPKRDYG). Composition is skewed to polar residues over residues 907–916 (ASANNPTSSI), 994–1013 (SYSS…TSFA), and 1029–1041 (FQNH…SSVY). Positions 1089-1100 (RKQEESKSHDHK) are enriched in basic and acidic residues.

The protein belongs to the protein-tyrosine phosphatase family. Non-receptor class dual specificity subfamily. As to expression, expressed in muscle fibers in a regular striated pattern (at protein level).

It localises to the cytoplasm. The protein resides in the myofibril. The protein localises to the sarcomere. Functionally, required for myofiber maturation. This is Serine/threonine/tyrosine-interacting-like protein 2 (styxl2) from Danio rerio (Zebrafish).